Here is a 467-residue protein sequence, read N- to C-terminus: Ribulose bisphosphate carboxylase large chain (467 aa).

An N6,N6,N6-trimethyllysine modification is found at lysine 6. Residues asparagine 115 and threonine 165 each contribute to the substrate site. The Proton acceptor role is filled by lysine 167. Substrate is bound at residue lysine 169. Positions 193, 195, and 196 each coordinate Mg(2+). Lysine 193 bears the N6-carboxylysine mark. Histidine 286 functions as the Proton acceptor in the catalytic mechanism. Substrate contacts are provided by arginine 287, histidine 319, and serine 371.

This sequence belongs to the RuBisCO large chain family. Type I subfamily. As to quaternary structure, heterohexadecamer of 8 large chains and 8 small chains; disulfide-linked. The disulfide link is formed within the large subunit homodimers. Requires Mg(2+) as cofactor. Post-translationally, the disulfide bond which can form in the large chain dimeric partners within the hexadecamer appears to be associated with oxidative stress and protein turnover.

The protein resides in the plastid. Its subcellular location is the chloroplast. It carries out the reaction 2 (2R)-3-phosphoglycerate + 2 H(+) = D-ribulose 1,5-bisphosphate + CO2 + H2O. The catalysed reaction is D-ribulose 1,5-bisphosphate + O2 = 2-phosphoglycolate + (2R)-3-phosphoglycerate + 2 H(+). Its function is as follows. RuBisCO catalyzes two reactions: the carboxylation of D-ribulose 1,5-bisphosphate, the primary event in carbon dioxide fixation, as well as the oxidative fragmentation of the pentose substrate in the photorespiration process. Both reactions occur simultaneously and in competition at the same active site. In Cedrus atlantica (Atlas cedar), this protein is Ribulose bisphosphate carboxylase large chain.